A 242-amino-acid polypeptide reads, in one-letter code: Biosynthetic peptidoglycan transglycosylase (242 aa).

A helical transmembrane segment spans residues 19–39 (LMVVLAVFWGGGIALFSVAPV).

The protein belongs to the glycosyltransferase 51 family.

It localises to the cell inner membrane. The catalysed reaction is [GlcNAc-(1-&gt;4)-Mur2Ac(oyl-L-Ala-gamma-D-Glu-L-Lys-D-Ala-D-Ala)](n)-di-trans,octa-cis-undecaprenyl diphosphate + beta-D-GlcNAc-(1-&gt;4)-Mur2Ac(oyl-L-Ala-gamma-D-Glu-L-Lys-D-Ala-D-Ala)-di-trans,octa-cis-undecaprenyl diphosphate = [GlcNAc-(1-&gt;4)-Mur2Ac(oyl-L-Ala-gamma-D-Glu-L-Lys-D-Ala-D-Ala)](n+1)-di-trans,octa-cis-undecaprenyl diphosphate + di-trans,octa-cis-undecaprenyl diphosphate + H(+). It participates in cell wall biogenesis; peptidoglycan biosynthesis. Functionally, peptidoglycan polymerase that catalyzes glycan chain elongation from lipid-linked precursors. This is Biosynthetic peptidoglycan transglycosylase from Escherichia coli O17:K52:H18 (strain UMN026 / ExPEC).